A 691-amino-acid chain; its full sequence is MESSKLLSLLRECTNSTKSLRRIKLVHQRILTLGLRRDVVLCKSLINVYFTCKDHCSARHVFENFDIRSDVYIWNSLMSGYSKNSMFHDTLEVFKRLLNCSICVPDSFTFPNVIKAYGALGREFLGRMIHTLVVKSGYVCDVVVASSLVGMYAKFNLFENSLQVFDEMPERDVASWNTVISCFYQSGEAEKALELFGRMESSGFEPNSVSLTVAISACSRLLWLERGKEIHRKCVKKGFELDEYVNSALVDMYGKCDCLEVAREVFQKMPRKSLVAWNSMIKGYVAKGDSKSCVEILNRMIIEGTRPSQTTLTSILMACSRSRNLLHGKFIHGYVIRSVVNADIYVNCSLIDLYFKCGEANLAETVFSKTQKDVAESWNVMISSYISVGNWFKAVEVYDQMVSVGVKPDVVTFTSVLPACSQLAALEKGKQIHLSISESRLETDELLLSALLDMYSKCGNEKEAFRIFNSIPKKDVVSWTVMISAYGSHGQPREALYQFDEMQKFGLKPDGVTLLAVLSACGHAGLIDEGLKFFSQMRSKYGIEPIIEHYSCMIDILGRAGRLLEAYEIIQQTPETSDNAELLSTLFSACCLHLEHSLGDRIARLLVENYPDDASTYMVLFNLYASGESWDAARRVRLKMKEMGLRKKPGCSWIEMSDKVCHFFAEDRSHLRAENVYECLALLSGHMESGQ.

16 PPR repeats span residues 38–68, 70–104, 106–140, 141–171, 172–206, 207–241, 242–272, 273–307, 308–342, 343–373, 374–408, 409–443, 444–474, 475–509, 510–540, and 546–576; these read DVVL…FDIR, DVYI…SICV, DSFT…GYVC, DVVV…MPER, DVAS…GFEP, NSVS…GFEL, DEYV…MPRK, SLVA…GTRP, SQTT…VVNA, DIYV…TQKD, VAES…GVKP, DVVT…RLET, DELL…IPKK, DVVS…GLKP, DGVT…MRSK, and IIEH…TPET. Positions 582–657 are type E motif; it reads LLSTLFSACC…KPGCSWIEMS (76 aa). Residues 658–688 are type E(+) motif; the sequence is DKVCHFFAEDRSHLRAENVYECLALLSGHME.

This sequence belongs to the PPR family. PCMP-E subfamily.

This chain is Pentatricopeptide repeat-containing protein At5g27110 (PCMP-E14), found in Arabidopsis thaliana (Mouse-ear cress).